We begin with the raw amino-acid sequence, 121 residues long: MIQLRSVLDVADNTGARKAAMISRKGQITATAGVGDIITVHIKQSSTEATVKKGEVHKAVVVRTKAPVRRADGSYLRFDSNAVVIIDPTNNPRGTRIFGPVARELRAKNFMKIISLAPEVL.

The protein belongs to the universal ribosomal protein uL14 family. Part of the 50S ribosomal subunit. Forms a cluster with proteins L3 and L19. In the 70S ribosome, L14 and L19 interact and together make contacts with the 16S rRNA in bridges B5 and B8.

Binds to 23S rRNA. Forms part of two intersubunit bridges in the 70S ribosome. This is Large ribosomal subunit protein uL14 from Opitutus terrae (strain DSM 11246 / JCM 15787 / PB90-1).